The primary structure comprises 98 residues: NADH-ubiquinone oxidoreductase chain 4L (98 aa).

A run of 3 helical transmembrane segments spans residues 1 to 21 (MMPI…GTLI), 28 to 48 (STLL…AMLI), and 59 to 79 (APLI…ALLV).

This sequence belongs to the complex I subunit 4L family. In terms of assembly, core subunit of respiratory chain NADH dehydrogenase (Complex I) which is composed of 45 different subunits.

Its subcellular location is the mitochondrion inner membrane. It catalyses the reaction a ubiquinone + NADH + 5 H(+)(in) = a ubiquinol + NAD(+) + 4 H(+)(out). Core subunit of the mitochondrial membrane respiratory chain NADH dehydrogenase (Complex I) which catalyzes electron transfer from NADH through the respiratory chain, using ubiquinone as an electron acceptor. Part of the enzyme membrane arm which is embedded in the lipid bilayer and involved in proton translocation. The chain is NADH-ubiquinone oxidoreductase chain 4L (MT-ND4L) from Petaurus breviceps (Australian sugar glider).